The chain runs to 582 residues: MEPSKLFTISDNATFAPGPVNNAADKKTFRTCFRILVLSVQAVTLILVIVTLGELVRMINDQGLSNQLSSITDKIRESATMIASAVGVMNQVIHGVTVSLPLQIEGNQNQLLSTLATICTSKKQISNCSTNIPLVNDLRFINGINKFIIEDYANHDFSIGHPLNMPSFIPTATSPNGCTRIPSFSLGKTHWCYTHNVINANCKDHTSSNQYVSMGILVQTASGYPMFKTLKIQYLSDGLNRKSCSIATVPDGCAMYCYVSTQLETDDYAGSSPPTQKLTLLFYNDTVTERTISPSGLEGNWATLVPGVGSGIYFENKLIFPAYGGVLPNSTLGVKLAREFFRPVNPYNPCSGPQQDLDQRALRSYFPSYLSNRRVQSAFLVCAWNQILVTNCELVVPSNNQTLMGAEGRVLLINNRLLYYQRSTSWWPYELLYEISFTFTNSGQSSVNMSWIPIYSFTRPGSGKCSGENVCPIACVSGVYLDPWPLTPYSHQSGINRNFYFTGALLNSSTTRVNPTLYVSALNNLKVLAPYGTQGLSASYTTTTCFQDTGDASVYCVYIMELASNIVGEFQILPVLTRLTIT.

At 1–34 (MEPSKLFTISDNATFAPGPVNNAADKKTFRTCFR) the chain is on the intravirion side. The helical; Signal-anchor for type II membrane protein transmembrane segment at 35–55 (ILVLSVQAVTLILVIVTLGEL) threads the bilayer. Residues 56 to 582 (VRMINDQGLS…LPVLTRLTIT (527 aa)) lie on the Virion surface side of the membrane. N-linked (GlcNAc...) asparagine; by host glycosylation occurs at asparagine 127. 3 disulfides stabilise this stretch: cysteine 178–cysteine 202, cysteine 192–cysteine 253, and cysteine 244–cysteine 257. The involved in neuraminidase activity stretch occupies residues 240-245 (NRKSCS). N-linked (GlcNAc...) asparagine; by host glycosylation is found at asparagine 284 and asparagine 329. 3 disulfide bridges follow: cysteine 350–cysteine 471, cysteine 382–cysteine 392, and cysteine 465–cysteine 475. Asparagine 400 and asparagine 448 each carry an N-linked (GlcNAc...) asparagine; by host glycan. Asparagine 507 is a glycosylation site (N-linked (GlcNAc...) asparagine; by host). A disulfide bridge links cysteine 545 with cysteine 556.

The protein belongs to the paramyxoviruses hemagglutinin-neuraminidase family. In terms of assembly, homotetramer; composed of disulfide-linked homodimers. Interacts with F protein trimer.

Its subcellular location is the virion membrane. It localises to the host cell membrane. The enzyme catalyses Hydrolysis of alpha-(2-&gt;3)-, alpha-(2-&gt;6)-, alpha-(2-&gt;8)- glycosidic linkages of terminal sialic acid residues in oligosaccharides, glycoproteins, glycolipids, colominic acid and synthetic substrates.. Attaches the virus to alpha-2,3-linked sialic acid-containing cell receptors and thereby initiating infection. Binding of HN protein to the receptor induces a conformational change that allows the F protein to trigger virion/cell membranes fusion. Binds to the glycan motifs sialyl Lewis (SLe) and GM2 ganglioside (GM2-glycan). Its function is as follows. Neuraminidase activity ensures the efficient spread of the virus by dissociating the mature virions from the neuraminic acid containing glycoproteins. This is Hemagglutinin-neuraminidase (HN) from Mumps virus (strain RW) (MuV).